The sequence spans 139 residues: ATP synthase epsilon chain (139 aa).

This sequence belongs to the ATPase epsilon chain family. In terms of assembly, F-type ATPases have 2 components, CF(1) - the catalytic core - and CF(0) - the membrane proton channel. CF(1) has five subunits: alpha(3), beta(3), gamma(1), delta(1), epsilon(1). CF(0) has three main subunits: a, b and c.

It localises to the cell inner membrane. In terms of biological role, produces ATP from ADP in the presence of a proton gradient across the membrane. The sequence is that of ATP synthase epsilon chain from Salmonella arizonae (strain ATCC BAA-731 / CDC346-86 / RSK2980).